The primary structure comprises 219 residues: uncharacterized protein (219 aa).

A compositionally biased stretch (low complexity) spans 1–17 (MIINNQNSPQSINTPSS). Residues 1 to 31 (MIINNQNSPQSINTPSSVSSRQHINKSKKKK) form a disordered region. Helical transmembrane passes span 49–69 (SLAT…LVCK) and 83–105 (LVYR…SYIG). Positions 135 to 219 (NHRSPIPLTN…NSDLEIPIPI (85 aa)) are disordered. The segment covering 144–212 (NLNNNNNNNN…SNNNNDNNSD (69 aa)) has biased composition (low complexity).

Its subcellular location is the membrane. This is an uncharacterized protein from Dictyostelium discoideum (Social amoeba).